A 91-amino-acid polypeptide reads, in one-letter code: Acylphosphatase (91 aa).

Residues 3 to 90 (RVSMIVSGQV…CGYSIFTIRR (88 aa)) form the Acylphosphatase-like domain. Residues R18 and N36 contribute to the active site.

The protein belongs to the acylphosphatase family.

It catalyses the reaction an acyl phosphate + H2O = a carboxylate + phosphate + H(+). This Methanospirillum hungatei JF-1 (strain ATCC 27890 / DSM 864 / NBRC 100397 / JF-1) protein is Acylphosphatase (acyP).